The sequence spans 755 residues: MANESKCPFNHAAGGGTTNRDWWPNQLNLKILSQHSPASDPMGKDFDYAKAFKSLDFQALKRDLTALMTDSQEWWPADFGHYGPLFIRMAWHSAGTYRTADGRGGAGSGQQRFAPLNSWPDNVSLDKARRLLWPIKQKYGRNISWADLIVLTGNVALESMGFKTFGFSGGRADVWEPDEDVYWGSENKWLGGDNRYGKDPESMQPPGEGTLVAEPAEHGNEESRTNQGERNLENPLAAVQMGLIYVNPEGPEGNPDPVASAKDIRETFGRMAMNDEETVALIAGGHAFGKTHGAGPADNVGPEPEAAGLEEQGLGWKNSFGTGKGADTITSGLEVTWTTTPTKWSNNYLENLFGFEWELTKSPAGAHQWKPKNGAGAGTIPHAHDPNKRIDPTMLTSDLALRFDPTYEKISRRFLANPDQLADAFARAWYKLIHRDMGPLSRYLGPELPQEELLWQDPIPEATHPLVDDSDIRALKGKILASGLSVSELVSTAWAAASTFRGSDKRGGANGGRLRLAPQKFWQANQPEQLDKVLKVLEGIQNEFNAGAAGKQVSLADLIVLAGNAGVEQAAQNAGHTVTVPFNPGRTDATQEQTDVESFGFLEPHTDGFRNYAASTYRVPAEALLIDKAQLLTLSAPEMTVLIGGLRVLDTNVGKTQHGVFTDRPGTLTNDFFRNLLDMGVEWKPTSKTEFEGRDRKTGSVKWTATRVDLVFGSNSVLRALAEVYASSDAKEQFVTDFVAAWAKVMDLDRFDLRQ.

Positions 91–245 (WHSAGTYRTA…LAAVQMGLIY (155 aa)) form a cross-link, tryptophyl-tyrosyl-methioninium (Trp-Tyr) (with M-271). The Proton acceptor role is filled by His92. The interval 193–229 (DNRYGKDPESMQPPGEGTLVAEPAEHGNEESRTNQGE) is disordered. The segment covering 215 to 224 (PAEHGNEESR) has biased composition (basic and acidic residues). The segment at residues 245–271 (YVNPEGPEGNPDPVASAKDIRETFGRM) is a cross-link (tryptophyl-tyrosyl-methioninium (Tyr-Met) (with W-91)). His286 is a heme binding site.

This sequence belongs to the peroxidase family. Peroxidase/catalase subfamily. In terms of assembly, homodimer or homotetramer. Requires heme b as cofactor. Post-translationally, formation of the three residue Trp-Tyr-Met cross-link is important for the catalase, but not the peroxidase activity of the enzyme.

The catalysed reaction is H2O2 + AH2 = A + 2 H2O. The enzyme catalyses 2 H2O2 = O2 + 2 H2O. Bifunctional enzyme with both catalase and broad-spectrum peroxidase activity. This is Catalase-peroxidase from Pseudomonas fluorescens (strain Pf0-1).